The primary structure comprises 202 residues: Sperm-specific H1/protamine-like protein type 1 (202 aa).

Residues 1–35 are compositionally biased toward basic residues; sequence MPSPSRKSRSRSRSRSKSPKRSPAKKARKTPKKPR. Disordered regions lie at residues 1-46 and 104-202; these read MPSP…PTTL and KTSA…QFAL. In terms of domain architecture, H15 spans 41 to 120; it reads KKPTTLSMIV…GATGSFRVGK (80 aa). Residues 126–156 show a composition bias toward basic residues; sequence KKAKKAKSPKKKSSKKSKNKSNNAKAKKSPK. Residues 177–187 show a composition bias toward low complexity; that stretch reads GARYPFRYQAY.

In terms of processing, OE1 and OE3 are produced by post-translational cleavage of a common precursor. In terms of tissue distribution, sperm.

The protein resides in the nucleus. It is found in the chromosome. Its function is as follows. Linker histones are implicated in chromatin remodeling and/or transcriptional regulation during spermiogenesis, the process of spermatid maturation into spermatozoa. Protamines substitute for histones in the chromatin of sperm during the haploid phase of spermatogenesis. They compact sperm DNA into a highly condensed, stable and inactive complex. The chain is Sperm-specific H1/protamine-like protein type 1 from Ostrea edulis (Native oyster).